The sequence spans 507 residues: Probable cytosol aminopeptidase (507 aa).

Mn(2+) is bound by residues Lys-275 and Asp-280. Residue Lys-287 is part of the active site. The Mn(2+) site is built by Asp-298, Asp-357, and Glu-359. Arg-361 is an active-site residue.

This sequence belongs to the peptidase M17 family. Mn(2+) serves as cofactor.

It localises to the cytoplasm. The catalysed reaction is Release of an N-terminal amino acid, Xaa-|-Yaa-, in which Xaa is preferably Leu, but may be other amino acids including Pro although not Arg or Lys, and Yaa may be Pro. Amino acid amides and methyl esters are also readily hydrolyzed, but rates on arylamides are exceedingly low.. The enzyme catalyses Release of an N-terminal amino acid, preferentially leucine, but not glutamic or aspartic acids.. Functionally, presumably involved in the processing and regular turnover of intracellular proteins. Catalyzes the removal of unsubstituted N-terminal amino acids from various peptides. The polypeptide is Probable cytosol aminopeptidase (Acidobacterium capsulatum (strain ATCC 51196 / DSM 11244 / BCRC 80197 / JCM 7670 / NBRC 15755 / NCIMB 13165 / 161)).